A 110-amino-acid polypeptide reads, in one-letter code: Large ribosomal subunit protein uL24 (110 aa).

The protein belongs to the universal ribosomal protein uL24 family. As to quaternary structure, part of the 50S ribosomal subunit.

Functionally, one of two assembly initiator proteins, it binds directly to the 5'-end of the 23S rRNA, where it nucleates assembly of the 50S subunit. Its function is as follows. One of the proteins that surrounds the polypeptide exit tunnel on the outside of the subunit. This is Large ribosomal subunit protein uL24 from Chloroflexus aggregans (strain MD-66 / DSM 9485).